The primary structure comprises 345 residues: Small ribosomal subunit protein mS45 (345 aa).

The N-terminal 27 residues, 1–27 (MSYGLTGTSSKLRGTSSIFSWTQVRHF), are a transit peptide targeting the mitochondrion.

Belongs to the mitochondrion-specific ribosomal protein mS45 family. As to quaternary structure, component of the mitochondrial small ribosomal subunit (mt-SSU). Mature yeast 74S mitochondrial ribosomes consist of a small (37S) and a large (54S) subunit. The 37S small subunit contains a 15S ribosomal RNA (15S mt-rRNA) and 34 different proteins. The 54S large subunit contains a 21S rRNA (21S mt-rRNA) and 46 different proteins.

It localises to the mitochondrion. In terms of biological role, component of the mitochondrial ribosome (mitoribosome), a dedicated translation machinery responsible for the synthesis of mitochondrial genome-encoded proteins, including at least some of the essential transmembrane subunits of the mitochondrial respiratory chain. The mitoribosomes are attached to the mitochondrial inner membrane and translation products are cotranslationally integrated into the membrane. This Saccharomyces cerevisiae (strain ATCC 204508 / S288c) (Baker's yeast) protein is Small ribosomal subunit protein mS45 (MRPS35).